Reading from the N-terminus, the 697-residue chain is General transcription factor IIH subunit 1 (697 aa).

Residues 115-136 (LPVSASNGSNTTSPTNGTSPIN) are compositionally biased toward low complexity. Disordered regions lie at residues 115–141 (LPVS…TSPT) and 228–250 (KNDS…ADVR). 2 consecutive BSD domains span residues 174–231 (LSKL…KNDS) and 255–307 (TPNA…YFYR). Residues 412–422 (KNLKKTKKDEN) show a composition bias toward basic and acidic residues. The interval 412–462 (KNLKKTKKDENSTSTPTTTTTTTNTTNTTNTTTTTTTNNTTIKDPNLYNGD) is disordered. The segment covering 423–452 (STSTPTTTTTTTNTTNTTNTTTTTTTNNTT) has biased composition (low complexity).

This sequence belongs to the TFB1 family. In terms of assembly, component of the 7-subunit TFIIH core complex composed of XPB/repB, XPD/repD, gtf2h1, gtf2h2, gtf2h3, gtf2h4 and gtf2h5, which is active in NER. The core complex associates with the 3-subunit CDK-activating kinase (CAK) module composed of cycH/cyclin H, cdk7 and mnat1 to form the 10-subunit holoenzyme (holo-TFIIH) active in transcription.

The protein localises to the nucleus. Functionally, component of the general transcription and DNA repair factor IIH (TFIIH) core complex, which is involved in general and transcription-coupled nucleotide excision repair (NER) of damaged DNA and, when complexed to CAK, in RNA transcription by RNA polymerase II. In NER, TFIIH acts by opening DNA around the lesion to allow the excision of the damaged oligonucleotide and its replacement by a new DNA fragment. In transcription, TFIIH has an essential role in transcription initiation. When the pre-initiation complex (PIC) has been established, TFIIH is required for promoter opening and promoter escape. Phosphorylation of the C-terminal tail (CTD) of the largest subunit of RNA polymerase II by the kinase module CAK controls the initiation of transcription. This chain is General transcription factor IIH subunit 1 (gtf2h1), found in Dictyostelium discoideum (Social amoeba).